The sequence spans 269 residues: Probable cysteine protease avirulence protein AvrPpiC2 (269 aa).

The disordered stretch occupies residues Met-1–Arg-39. Residues Ser-13–Asn-27 are compositionally biased toward polar residues. Active-site residues include Cys-72, His-213, and Asp-230.

The protein belongs to the peptidase C58 family.

In terms of biological role, potential cysteine protease. Avirulence protein, which may be essential during infection of plant cells from Pea and some Arabidopsis thaliana cultivars. May act by affecting the plant defense system. In plants lacking appropriate resistance (R) gene, it probably impairs the plant defense system and leads to the bacteria multiplication. In contrast, in plants containing the appropriate R protein, it is unable to induce disease symptoms, explaining its avirulence name. The sequence is that of Probable cysteine protease avirulence protein AvrPpiC2 (avrPpiC2) from Pseudomonas syringae pv. pisi.